Consider the following 358-residue polypeptide: DNA-directed RNA polymerase subunit alpha (358 aa).

The alpha N-terminal domain (alpha-NTD) stretch occupies residues 1–231; sequence MIQNVTDDKI…NIFLSLSNSS (231 aa). The interval 266 to 358 is alpha C-terminal domain (alpha-CTD); that stretch reads QESLGWKKIS…LELINNKDIS (93 aa).

The protein belongs to the RNA polymerase alpha chain family. In terms of assembly, in plastids the minimal PEP RNA polymerase catalytic core is composed of four subunits: alpha, beta, beta', and beta''. When a (nuclear-encoded) sigma factor is associated with the core the holoenzyme is formed, which can initiate transcription.

The protein resides in the plastid. It is found in the chloroplast. It carries out the reaction RNA(n) + a ribonucleoside 5'-triphosphate = RNA(n+1) + diphosphate. Functionally, DNA-dependent RNA polymerase catalyzes the transcription of DNA into RNA using the four ribonucleoside triphosphates as substrates. This is DNA-directed RNA polymerase subunit alpha from Chara vulgaris (Common stonewort).